A 642-amino-acid polypeptide reads, in one-letter code: Threonine--tRNA ligase (642 aa).

Residues 1 to 61 enclose the TGS domain; sequence MPVIRFYDGS…REDAFIEFVD (61 aa). A catalytic region spans residues 243 to 534; that stretch reads DHRKIGKFLQ…LIEECSGNLP (292 aa). Residues cysteine 334, histidine 385, and histidine 511 each contribute to the Zn(2+) site.

Belongs to the class-II aminoacyl-tRNA synthetase family. Homodimer. The cofactor is Zn(2+).

It is found in the cytoplasm. The enzyme catalyses tRNA(Thr) + L-threonine + ATP = L-threonyl-tRNA(Thr) + AMP + diphosphate + H(+). Functionally, catalyzes the attachment of threonine to tRNA(Thr) in a two-step reaction: L-threonine is first activated by ATP to form Thr-AMP and then transferred to the acceptor end of tRNA(Thr). Also edits incorrectly charged L-seryl-tRNA(Thr). The chain is Threonine--tRNA ligase from Buchnera aphidicola subsp. Acyrthosiphon pisum (strain APS) (Acyrthosiphon pisum symbiotic bacterium).